We begin with the raw amino-acid sequence, 268 residues long: Large ribosomal subunit protein uL4 (268 aa).

The protein belongs to the universal ribosomal protein uL4 family. In terms of assembly, part of the 50S ribosomal subunit.

One of the primary rRNA binding proteins, this protein initially binds near the 5'-end of the 23S rRNA. It is important during the early stages of 50S assembly. It makes multiple contacts with different domains of the 23S rRNA in the assembled 50S subunit and ribosome. In terms of biological role, forms part of the polypeptide exit tunnel. The protein is Large ribosomal subunit protein uL4 of Nanoarchaeum equitans (strain Kin4-M).